The sequence spans 473 residues: Phosphatidylserine synthase 1 (473 aa).

An N-acetylalanine modification is found at A2. The Cytoplasmic portion of the chain corresponds to 2 to 35; it reads ASCVGSRTLSKDDVNYRMHFRMINEQQVEDITID. Residues 36–56 form a helical membrane-spanning segment; that stretch reads FFYRPHTITLLSFTIISLMYF. At 57–72 the chain is on the lumenal side; that stretch reads AFTRDDSVPEDNIWRG. A helical transmembrane segment spans residues 73 to 93; the sequence is ILSVIFFFLIISVLAFPNGPF. Residues 94 to 102 are Cytoplasmic-facing; sequence TRPHPALWR. A helical membrane pass occupies residues 103-123; that stretch reads MVFGLSVLYFLFLVFLLFLNF. Over 124 to 186 the chain is Lumenal; sequence EQVKSLMYWL…AMKALLIRSY (63 aa). A helical membrane pass occupies residues 187-207; that stretch reads GLCWTISITWELTELFFMHLL. The Cytoplasmic portion of the chain corresponds to 208 to 216; that stretch reads PNFAECWWD. A helical transmembrane segment spans residues 217 to 237; that stretch reads QVILDILLCNGGGIWLGMVVC. Topologically, residues 238 to 286 are lumenal; it reads RFLEMRTYHWASFKDIHTTTGKIKRAVLQFTPASWTYVRWFDPKSSFQR. A helical transmembrane segment spans residues 287 to 307; that stretch reads VAGIYLFMIIWQLTELNTFFL. Topologically, residues 308-319 are cytoplasmic; the sequence is KHIFVFQASHPL. The chain crosses the membrane as a helical span at residues 320 to 342; sequence SWGRILFIGCITAPTVRQYYAYL. Topologically, residues 343-355 are lumenal; the sequence is TDTQCKRVGTQCW. Residues 356–376 traverse the membrane as a helical segment; sequence VFGVIGFLEAIVCIKFGQDLF. The Cytoplasmic portion of the chain corresponds to 377–383; it reads SKTQILY. A helical membrane pass occupies residues 384–404; it reads VMLWLLCVAFTTFLCLYGMVW. Over 405 to 473 the chain is Lumenal; sequence YAEHYGHREK…SKVTNGVGKK (69 aa). Phosphoserine occurs at positions 417, 425, 442, and 454. The segment at 428–473 is disordered; sequence ISWHHGKGSKGSEDSPPKHSSNHESHSSRRRNRHSKSKVTNGVGKK. The segment covering 437–454 has biased composition (basic and acidic residues); the sequence is KGSEDSPPKHSSNHESHS. Residues 455–464 are compositionally biased toward basic residues; it reads SRRRNRHSKS.

The protein belongs to the phosphatidyl serine synthase family. In terms of tissue distribution, expressed in kidney, testis, lung, skeletal muscle, liver brain, heart and spleen with highest expression in testis, liver, heart and brain.

The protein localises to the endoplasmic reticulum membrane. It carries out the reaction a 1,2-diacyl-sn-glycero-3-phosphoethanolamine + L-serine = a 1,2-diacyl-sn-glycero-3-phospho-L-serine + ethanolamine. It catalyses the reaction a 1,2-diacyl-sn-glycero-3-phosphocholine + L-serine = a 1,2-diacyl-sn-glycero-3-phospho-L-serine + choline. It participates in phospholipid metabolism; phosphatidylserine biosynthesis. With respect to regulation, potently inhibited by choline in the mitochondria-associated membrane (MAM). Very little inhibition by choline in the endoplasmic reticulum (ER) per se. Functionally, catalyzes a base-exchange reaction in which the polar head group of phosphatidylethanolamine (PE) or phosphatidylcholine (PC) is replaced by L-serine. Catalyzes mainly the conversion of phosphatidylcholine. Also converts, in vitro and to a lesser extent, phosphatidylethanolamine. The sequence is that of Phosphatidylserine synthase 1 (Ptdss1) from Mus musculus (Mouse).